Reading from the N-terminus, the 328-residue chain is V-set and immunoglobulin domain-containing protein 2 (328 aa).

The N-terminal stretch at 1–24 (MAWPLVGAFLCGHLLGFVCLSGLA) is a signal peptide. Positions 25–138 (VEVTVPTEPL…DFYTNGLGLI (114 aa)) constitute an Ig-like V-type domain. Over 25–244 (VEVTVPTEPL…VTDSSEGRVA (220 aa)) the chain is Extracellular. Cysteines 46 and 122 form a disulfide. N-linked (GlcNAc...) asparagine glycosylation is found at Asn-139, Asn-207, and Asn-232. Residues 145–234 (PPSHPLCSQS…GSASCELNLS (90 aa)) form the Ig-like C2-type domain. Cys-167 and Cys-218 are joined by a disulfide. The chain crosses the membrane as a helical span at residues 245 to 265 (GTLIGVLLGVLLLSVAAFCLI). Residues 266-328 (RFQKERKKEP…TTKSKLSMVV (63 aa)) lie on the Cytoplasmic side of the membrane.

As to expression, expressed in the stomach, colon and prostate.

It localises to the membrane. The sequence is that of V-set and immunoglobulin domain-containing protein 2 (Vsig2) from Mus musculus (Mouse).